Reading from the N-terminus, the 1196-residue chain is DNA-directed RNA polymerase subunit beta (1196 aa).

This sequence belongs to the RNA polymerase beta chain family. The RNAP catalytic core consists of 2 alpha, 1 beta, 1 beta' and 1 omega subunit. When a sigma factor is associated with the core the holoenzyme is formed, which can initiate transcription.

It catalyses the reaction RNA(n) + a ribonucleoside 5'-triphosphate = RNA(n+1) + diphosphate. In terms of biological role, DNA-dependent RNA polymerase catalyzes the transcription of DNA into RNA using the four ribonucleoside triphosphates as substrates. This Lactococcus lactis subsp. cremoris (strain SK11) protein is DNA-directed RNA polymerase subunit beta.